A 391-amino-acid chain; its full sequence is Phosphoglycerate kinase (391 aa).

Substrate is bound by residues 21–23, arginine 36, 59–62, arginine 113, and arginine 146; these read DLN and HLGR. ATP-binding positions include lysine 197, glutamate 319, and 345-348; that span reads GGDT.

Belongs to the phosphoglycerate kinase family. In terms of assembly, monomer.

The protein resides in the cytoplasm. It catalyses the reaction (2R)-3-phosphoglycerate + ATP = (2R)-3-phospho-glyceroyl phosphate + ADP. It functions in the pathway carbohydrate degradation; glycolysis; pyruvate from D-glyceraldehyde 3-phosphate: step 2/5. The sequence is that of Phosphoglycerate kinase from Shewanella putrefaciens (strain CN-32 / ATCC BAA-453).